A 334-amino-acid chain; its full sequence is Glyceraldehyde-3-phosphate dehydrogenase (334 aa).

Residues 11 to 12, aspartate 33, and serine 119 each bind NAD(+); that span reads RI. D-glyceraldehyde 3-phosphate is bound by residues 149 to 151 and threonine 180; that span reads SCT. Catalysis depends on cysteine 150, which acts as the Nucleophile. Asparagine 181 is an NAD(+) binding site. Residues arginine 197, 210–211, and arginine 233 contribute to the D-glyceraldehyde 3-phosphate site; that span reads TG. An NAD(+)-binding site is contributed by asparagine 314.

The protein belongs to the glyceraldehyde-3-phosphate dehydrogenase family. As to quaternary structure, homotetramer.

It localises to the cytoplasm. The enzyme catalyses D-glyceraldehyde 3-phosphate + phosphate + NAD(+) = (2R)-3-phospho-glyceroyl phosphate + NADH + H(+). Its pathway is carbohydrate degradation; glycolysis; pyruvate from D-glyceraldehyde 3-phosphate: step 1/5. Functionally, catalyzes the oxidative phosphorylation of glyceraldehyde 3-phosphate (G3P) to 1,3-bisphosphoglycerate (BPG) using the cofactor NAD. The first reaction step involves the formation of a hemiacetal intermediate between G3P and a cysteine residue, and this hemiacetal intermediate is then oxidized to a thioester, with concomitant reduction of NAD to NADH. The reduced NADH is then exchanged with the second NAD, and the thioester is attacked by a nucleophilic inorganic phosphate to produce BPG. The chain is Glyceraldehyde-3-phosphate dehydrogenase (gap) from Clostridium pasteurianum.